The chain runs to 385 residues: Aldehyde dehydrogenase family 3 member B2 (385 aa).

107–112 (GSPRVG) contributes to the NAD(+) binding site. Catalysis depends on residues Glu129 and Cys163. A Cysteine methyl ester modification is found at Cys382. The S-geranylgeranyl cysteine moiety is linked to residue Cys382. Residues 383 to 385 (TLL) constitute a propeptide, removed in mature form.

This sequence belongs to the aldehyde dehydrogenase family. Post-translationally, geranylgeranylation is important for localization to lipid droplets and enzyme activity. In terms of tissue distribution, salivary gland. Expressed at protein level in placenta.

It is found in the lipid droplet. The catalysed reaction is an aldehyde + NAD(+) + H2O = a carboxylate + NADH + 2 H(+). The enzyme catalyses a long-chain fatty aldehyde + NAD(+) + H2O = a long-chain fatty acid + NADH + 2 H(+). It catalyses the reaction a medium-chain fatty aldehyde + NAD(+) + H2O = a medium-chain fatty acid + NADH + 2 H(+). It carries out the reaction hexadecanoate + NADH + 2 H(+) = hexadecanal + NAD(+) + H2O. The catalysed reaction is octanal + NAD(+) + H2O = octanoate + NADH + 2 H(+). Its pathway is alcohol metabolism; ethanol degradation; acetate from ethanol: step 2/2. Oxidizes medium and long chain fatty aldehydes in lipid droplets into non-toxic fatty acids. This is Aldehyde dehydrogenase family 3 member B2 (ALDH3B2) from Homo sapiens (Human).